We begin with the raw amino-acid sequence, 230 residues long: Octanoyltransferase (230 aa).

Residues 40 to 218 form the BPL/LPL catalytic domain; the sequence is PSLDDVLILL…CFAEVFGVEL (179 aa). Substrate-binding positions include 82–89, 149–151, and 162–164; these read RGGEVTYH, AIG, and GFA. C180 acts as the Acyl-thioester intermediate in catalysis.

It belongs to the LipB family.

It is found in the cytoplasm. It carries out the reaction octanoyl-[ACP] + L-lysyl-[protein] = N(6)-octanoyl-L-lysyl-[protein] + holo-[ACP] + H(+). It participates in protein modification; protein lipoylation via endogenous pathway; protein N(6)-(lipoyl)lysine from octanoyl-[acyl-carrier-protein]: step 1/2. In terms of biological role, catalyzes the transfer of endogenously produced octanoic acid from octanoyl-acyl-carrier-protein onto the lipoyl domains of lipoate-dependent enzymes. Lipoyl-ACP can also act as a substrate although octanoyl-ACP is likely to be the physiological substrate. In Nostoc punctiforme (strain ATCC 29133 / PCC 73102), this protein is Octanoyltransferase.